The chain runs to 718 residues: MISTKEKNKIPKDSMTLLPCFYFVELPIVASSIVSLYFLELTDLFKPAKVGFQCYDRTLSMPYVETNEELIPLLMLLSLAFAAPAASIMVAEGMLYCLQSRLWGRAGGPAGAEGSINAGGCNFNSFLRRTVRFVGVHVFGLCATALVTDVIQLATGYHTPFFLTVCKPNYTLLGTSCEVNPYITQDICSGHDIHAILSARKTFPSQHATLSAFAAVYVSMYFNSVISDTTKLLKPILVFAFAIAAGVCGLTQITQYRSHPVDVYAGFLIGAGIAAYLACHAVGNFQAPPAEKPAAPAPAKDALRALTQRGHDSVYQQNKSVSTDELGPPGRLEGAPRPVAREKTSLGSLKRASVDVDLLAPRSPMAKENMVTFSHTLPRASAPSLDDPARRHMTIHVPLDASRSKQLISEWKQKSLEGRGLGLPDDASPGHLRAPAEPMAEEEEEEEDEEEEEEEEEEEDEGPAPPSLYPTVQARPGLGPRVILPPRAGPPPLVHIPEEGAQTGAGLSPKSGAGVRAKWLMMAEKSGAAVANPPRLLQVIAMSKAPGAPGPKAAETASSSSASSDSSQYRSPSDRDSASIVTIDAHAPHHPVVHLSAGGAPWEWKAAGGGAKAEADGGYELGDLARGFRGGAKPPGVSPGSSVSDVDQEEPRFGAVATVNLATGEGLPPLGAADGALGPGSRESTLRRHAGGLGLAEREAEAEAEGYFRKMQARRFPD.

Transmembrane regions (helical) follow at residues 18–38 (LPCFYFVELPIVASSIVSLYF), 70–90 (LIPLLMLLSLAFAAPAASIMV), and 133–153 (FVGVHVFGLCATALVTDVIQL). N-linked (GlcNAc...) asparagine glycosylation is present at Asn-169. 3 helical membrane passes run 207-227 (HATLSAFAAVYVSMYFNSVIS), 233-253 (LKPILVFAFAIAAGVCGLTQI), and 263-283 (VYAGFLIGAGIAAYLACHAVG). The disordered stretch occupies residues 313–347 (SVYQQNKSVSTDELGPPGRLEGAPRPVAREKTSLG). The segment covering 314–323 (VYQQNKSVST) has biased composition (polar residues). An N-linked (GlcNAc...) asparagine glycan is attached at Asn-318. Ser-322 and Ser-353 each carry phosphoserine. Thr-376 carries the phosphothreonine modification. The tract at residues 416–488 (LEGRGLGLPD…GPRVILPPRA (73 aa)) is disordered. Ser-428 carries the phosphoserine modification. A compositionally biased stretch (acidic residues) spans 439 to 462 (MAEEEEEEEDEEEEEEEEEEEDEG). Ser-508 is modified (phosphoserine). Over residues 545-571 (APGAPGPKAAETASSSSASSDSSQYRS) the composition is skewed to low complexity. A disordered region spans residues 545 to 577 (APGAPGPKAAETASSSSASSDSSQYRSPSDRDS). Ser-641 bears the Phosphoserine mark. The span at 664-680 (GEGLPPLGAADGALGPG) shows a compositional bias: low complexity. The interval 664-702 (GEGLPPLGAADGALGPGSRESTLRRHAGGLGLAEREAEA) is disordered.

It belongs to the PA-phosphatase related phosphoesterase family.

The protein localises to the membrane. This chain is Phospholipid phosphatase-related protein type 3, found in Homo sapiens (Human).